Consider the following 252-residue polypeptide: Aliphatic sulfonates import ATP-binding protein SsuB 1 (252 aa).

Residues 6–234 (LQLHIAGKRF…PRDRQAHEAA (229 aa)) enclose the ABC transporter domain. 38–45 (GASGCGKS) serves as a coordination point for ATP.

It belongs to the ABC transporter superfamily. Aliphatic sulfonates importer (TC 3.A.1.17.2) family. As to quaternary structure, the complex is composed of two ATP-binding proteins (SsuB), two transmembrane proteins (SsuC) and a solute-binding protein (SsuA).

Its subcellular location is the cell inner membrane. It catalyses the reaction ATP + H2O + aliphatic sulfonate-[sulfonate-binding protein]Side 1 = ADP + phosphate + aliphatic sulfonateSide 2 + [sulfonate-binding protein]Side 1.. Its function is as follows. Part of the ABC transporter complex SsuABC involved in aliphatic sulfonates import. Responsible for energy coupling to the transport system. The sequence is that of Aliphatic sulfonates import ATP-binding protein SsuB 1 from Xanthomonas axonopodis pv. citri (strain 306).